Consider the following 407-residue polypeptide: S-adenosylmethionine synthase (407 aa).

Residue His15 participates in ATP binding. Asp17 is a Mg(2+) binding site. Glu43 is a binding site for K(+). L-methionine is bound by residues Glu56 and Gln100. The tract at residues 100–110 (QSPDIAQGVDE) is flexible loop. ATP contacts are provided by residues 171-173 (DGK), 248-249 (KF), Asp257, 263-264 (RK), Ala280, and Lys284. Asp257 serves as a coordination point for L-methionine. Residue Lys288 participates in L-methionine binding.

The protein belongs to the AdoMet synthase family. In terms of assembly, homotetramer; dimer of dimers. Mg(2+) is required as a cofactor. K(+) serves as cofactor.

Its subcellular location is the cytoplasm. The catalysed reaction is L-methionine + ATP + H2O = S-adenosyl-L-methionine + phosphate + diphosphate. The protein operates within amino-acid biosynthesis; S-adenosyl-L-methionine biosynthesis; S-adenosyl-L-methionine from L-methionine: step 1/1. Its function is as follows. Catalyzes the formation of S-adenosylmethionine (AdoMet) from methionine and ATP. The overall synthetic reaction is composed of two sequential steps, AdoMet formation and the subsequent tripolyphosphate hydrolysis which occurs prior to release of AdoMet from the enzyme. The chain is S-adenosylmethionine synthase from Synechococcus sp. (strain RCC307).